The chain runs to 351 residues: Transaldolase (351 aa).

The Schiff-base intermediate with substrate role is filled by Lys-138.

The protein belongs to the transaldolase family. Type 2 subfamily.

Its subcellular location is the cytoplasm. It carries out the reaction D-sedoheptulose 7-phosphate + D-glyceraldehyde 3-phosphate = D-erythrose 4-phosphate + beta-D-fructose 6-phosphate. Its pathway is carbohydrate degradation; pentose phosphate pathway; D-glyceraldehyde 3-phosphate and beta-D-fructose 6-phosphate from D-ribose 5-phosphate and D-xylulose 5-phosphate (non-oxidative stage): step 2/3. Transaldolase is important for the balance of metabolites in the pentose-phosphate pathway. This chain is Transaldolase, found in Neisseria meningitidis serogroup C (strain 053442).